The chain runs to 143 residues: Small ribosomal subunit protein uS12 (143 aa).

Residues 1–20 (MGKPRGLRTARKLKNHRREQ) show a composition bias toward basic residues. Residues 1–28 (MGKPRGLRTARKLKNHRREQRWHDKDYK) are disordered. Pro62 bears the Hydroxyproline mark.

It belongs to the universal ribosomal protein uS12 family. Component of the 40S small ribosomal subunit.

The protein localises to the cytoplasm. It is found in the cytosol. It localises to the rough endoplasmic reticulum. In Lumbricus rubellus (Humus earthworm), this protein is Small ribosomal subunit protein uS12 (RPS23).